A 491-amino-acid polypeptide reads, in one-letter code: V-type proton ATPase subunit B 1 (491 aa).

Position 380 (arginine 380) interacts with ATP.

It belongs to the ATPase alpha/beta chains family. As to quaternary structure, V-ATPase is a heteromultimeric enzyme made up of two complexes: the ATP-hydrolytic V1 complex and the proton translocation V0 complex. The V1 complex consists of three catalytic AB heterodimers that form a heterohexamer, three peripheral stalks each consisting of EG heterodimers, one central rotor including subunits D and F, and the regulatory subunits C and H. The proton translocation complex V0 consists of the proton transport subunit a, a ring of proteolipid subunits c9c'', rotary subunit d, subunits e and f, and the accessory subunits vah-19/Ac45 and vah-20/PRR. Expressed ubiquitously. Highly expressed in the H-shaped excretory cell, the excretory pore, the intestine, and hypodermal cells. Expressed in the nervous system. Expressed at low levels in muscles.

Functionally, non-catalytic subunit of the V1 complex of vacuolar(H+)-ATPase (V-ATPase), a multisubunit enzyme composed of a peripheral complex (V1) that hydrolyzes ATP and a membrane integral complex (V0) that translocates protons. V-ATPase is responsible for acidifying and maintaining the pH of intracellular compartments and in some cell types, is targeted to the plasma membrane, where it is responsible for acidifying the extracellular environment. Essential for the proper assembly and activity of V-ATPase. Required maternally for early embryogenesis and zygotically during morphogenesis. Specifically, involved in the clearance of apoptotic cell corpses in embryos. Also, during embryonic development, the V-ATPase is required to repress fusion of epidermal cells probably by negatively regulating eff-1-mediated cell fusion. In neurons, required for necrotic cell death by promoting intracellular acidification. Required for cell death induced by hypoxia. Required for acidification of synaptic vesicles and the release of neurotransmitters from adult neurons. The sequence is that of V-type proton ATPase subunit B 1 from Caenorhabditis elegans.